The chain runs to 79 residues: uncharacterized protein (79 aa).

It belongs to the BolA/IbaG family.

This is an uncharacterized protein from Buchnera aphidicola subsp. Baizongia pistaciae (strain Bp).